Consider the following 239-residue polypeptide: UDP-2,3-diacylglucosamine hydrolase (239 aa).

Residues D8, H10, D41, N78, and H113 each coordinate Mn(2+). 78–79 (NR) serves as a coordination point for substrate. Residues D121, S159, N163, K166, and H194 each coordinate substrate. Residues H194 and H196 each contribute to the Mn(2+) site.

The protein belongs to the LpxH family. The cofactor is Mn(2+).

The protein localises to the cell inner membrane. It carries out the reaction UDP-2-N,3-O-bis[(3R)-3-hydroxytetradecanoyl]-alpha-D-glucosamine + H2O = 2-N,3-O-bis[(3R)-3-hydroxytetradecanoyl]-alpha-D-glucosaminyl 1-phosphate + UMP + 2 H(+). The protein operates within glycolipid biosynthesis; lipid IV(A) biosynthesis; lipid IV(A) from (3R)-3-hydroxytetradecanoyl-[acyl-carrier-protein] and UDP-N-acetyl-alpha-D-glucosamine: step 4/6. Hydrolyzes the pyrophosphate bond of UDP-2,3-diacylglucosamine to yield 2,3-diacylglucosamine 1-phosphate (lipid X) and UMP by catalyzing the attack of water at the alpha-P atom. Involved in the biosynthesis of lipid A, a phosphorylated glycolipid that anchors the lipopolysaccharide to the outer membrane of the cell. In Shewanella sp. (strain ANA-3), this protein is UDP-2,3-diacylglucosamine hydrolase.